Here is a 715-residue protein sequence, read N- to C-terminus: Methionine--tRNA ligase (715 aa).

A 'HIGH' region motif is present at residues 17–27; sequence PYANGPIHLGH. Positions 148, 151, 161, and 164 each coordinate Zn(2+). The short motif at 359 to 363 is the 'KMSKS' region element; the sequence is KMSKS. Position 362 (Lys362) interacts with ATP. The 102-residue stretch at 614 to 715 folds into the tRNA-binding domain; that stretch reads DLSKVELRVG…KDAKPGDRLK (102 aa).

It belongs to the class-I aminoacyl-tRNA synthetase family. MetG type 1 subfamily. Homodimer. It depends on Zn(2+) as a cofactor.

The protein localises to the cytoplasm. The enzyme catalyses tRNA(Met) + L-methionine + ATP = L-methionyl-tRNA(Met) + AMP + diphosphate. Its function is as follows. Is required not only for elongation of protein synthesis but also for the initiation of all mRNA translation through initiator tRNA(fMet) aminoacylation. The chain is Methionine--tRNA ligase from Leptospira interrogans serogroup Icterohaemorrhagiae serovar copenhageni (strain Fiocruz L1-130).